The chain runs to 312 residues: Ribosomal RNA small subunit methyltransferase H (312 aa).

S-adenosyl-L-methionine is bound by residues 35–37, Asp-55, Phe-79, Asp-101, and Gln-108; that span reads GGH.

It belongs to the methyltransferase superfamily. RsmH family.

It is found in the cytoplasm. The enzyme catalyses cytidine(1402) in 16S rRNA + S-adenosyl-L-methionine = N(4)-methylcytidine(1402) in 16S rRNA + S-adenosyl-L-homocysteine + H(+). Its function is as follows. Specifically methylates the N4 position of cytidine in position 1402 (C1402) of 16S rRNA. This Buchnera aphidicola subsp. Schizaphis graminum (strain Sg) protein is Ribosomal RNA small subunit methyltransferase H.